The primary structure comprises 422 residues: 26S proteasome non-ATPase regulatory subunit 11 (422 aa).

At A2 the chain carries N-acetylalanine. Phosphoserine is present on residues S14 and S23. Residues 224 to 392 form the PCI domain; that stretch reads DWKTAYSYFY…GVLIIFDEPP (169 aa). Residue K274 forms a Glycyl lysine isopeptide (Lys-Gly) (interchain with G-Cter in SUMO2) linkage.

It belongs to the proteasome subunit S9 family. As to quaternary structure, component of the 19S proteasome regulatory particle complex. The 26S proteasome consists of a 20S core particle (CP) and two 19S regulatory subunits (RP). The regulatory particle is made of a lid composed of 9 subunits including PSMD11, a base containing 6 ATPases and few additional components. In terms of processing, phosphorylated by AMPK.

It is found in the nucleus. The protein localises to the cytoplasm. Its subcellular location is the cytosol. Its function is as follows. Component of the 26S proteasome, a multiprotein complex involved in the ATP-dependent degradation of ubiquitinated proteins. This complex plays a key role in the maintenance of protein homeostasis by removing misfolded or damaged proteins, which could impair cellular functions, and by removing proteins whose functions are no longer required. Therefore, the proteasome participates in numerous cellular processes, including cell cycle progression, apoptosis, or DNA damage repair. In the complex, PSMD11 is required for proteasome assembly. Plays a key role in increased proteasome activity in embryonic stem cells (ESCs): its high expression in ESCs promotes enhanced assembly of the 26S proteasome, followed by higher proteasome activity. This Bos taurus (Bovine) protein is 26S proteasome non-ATPase regulatory subunit 11 (PSMD11).